We begin with the raw amino-acid sequence, 453 residues long: Allantoinase (453 aa).

The Zn(2+) site is built by His59, His61, Lys146, His186, His242, and Asp315. The residue at position 146 (Lys146) is an N6-carboxylysine.

This sequence belongs to the metallo-dependent hydrolases superfamily. Allantoinase family. Homotetramer. Zn(2+) serves as cofactor. Carboxylation allows a single lysine to coordinate two zinc ions.

The enzyme catalyses (S)-allantoin + H2O = allantoate + H(+). It participates in nitrogen metabolism; (S)-allantoin degradation; allantoate from (S)-allantoin: step 1/1. Catalyzes the conversion of allantoin (5-ureidohydantoin) to allantoic acid by hydrolytic cleavage of the five-member hydantoin ring. This is Allantoinase from Salmonella paratyphi B (strain ATCC BAA-1250 / SPB7).